A 262-amino-acid chain; its full sequence is tRNA pseudouridine synthase A (262 aa).

The Nucleophile role is filled by Asp-51. Position 109 (Tyr-109) interacts with substrate.

It belongs to the tRNA pseudouridine synthase TruA family. Homodimer.

The enzyme catalyses uridine(38/39/40) in tRNA = pseudouridine(38/39/40) in tRNA. Functionally, formation of pseudouridine at positions 38, 39 and 40 in the anticodon stem and loop of transfer RNAs. In Actinobacillus pleuropneumoniae serotype 3 (strain JL03), this protein is tRNA pseudouridine synthase A.